We begin with the raw amino-acid sequence, 328 residues long: uncharacterized protein (328 aa).

Residues 1–25 (MKLFNFKKLSMLIAGFTLVTSPALA) form the signal peptide.

It belongs to the bacterial solute-binding protein 7 family.

It localises to the periplasm. This is an uncharacterized protein from Haemophilus influenzae (strain ATCC 51907 / DSM 11121 / KW20 / Rd).